Here is a 329-residue protein sequence, read N- to C-terminus: Aspartate carbamoyltransferase catalytic subunit (329 aa).

Residues R66 and T67 each contribute to the carbamoyl phosphate site. K94 is an L-aspartate binding site. Carbamoyl phosphate contacts are provided by R116, H149, and Q152. R189 and R243 together coordinate L-aspartate. 2 residues coordinate carbamoyl phosphate: G284 and P285.

The protein belongs to the aspartate/ornithine carbamoyltransferase superfamily. ATCase family. In terms of assembly, heterododecamer (2C3:3R2) of six catalytic PyrB chains organized as two trimers (C3), and six regulatory PyrI chains organized as three dimers (R2).

The catalysed reaction is carbamoyl phosphate + L-aspartate = N-carbamoyl-L-aspartate + phosphate + H(+). Its pathway is pyrimidine metabolism; UMP biosynthesis via de novo pathway; (S)-dihydroorotate from bicarbonate: step 2/3. In terms of biological role, catalyzes the condensation of carbamoyl phosphate and aspartate to form carbamoyl aspartate and inorganic phosphate, the committed step in the de novo pyrimidine nucleotide biosynthesis pathway. The protein is Aspartate carbamoyltransferase catalytic subunit of Gloeobacter violaceus (strain ATCC 29082 / PCC 7421).